Reading from the N-terminus, the 202-residue chain is Small ribosomal subunit protein uS4 (202 aa).

Positions 1–13 (MSRYRGPRLRVTR) are enriched in basic residues. Positions 1–42 (MSRYRGPRLRVTRRLGELPGLTRKASKKSNPPGQHGQARRKR) are disordered. The S4 RNA-binding domain occupies 90–152 (NRLDNVCFRL…KASKKLVEGN (63 aa)).

Belongs to the universal ribosomal protein uS4 family. In terms of assembly, part of the 30S ribosomal subunit. Contacts protein S5. The interaction surface between S4 and S5 is involved in control of translational fidelity.

Functionally, one of the primary rRNA binding proteins, it binds directly to 16S rRNA where it nucleates assembly of the body of the 30S subunit. With S5 and S12 plays an important role in translational accuracy. This is Small ribosomal subunit protein uS4 from Prochlorococcus marinus (strain MIT 9515).